The primary structure comprises 344 residues: Transcription factor AIG1 (344 aa).

Residues 131–180 form the bHLH domain; sequence AASKSHSEAERRRRERINTHLAKLRSILPNTTKTDKASLLAEVIQHMKEL. Residues 313–344 are disordered; that stretch reads NDESNDNNNLEKSSSGGIKRQRTSKMVNRCYN. A compositionally biased stretch (low complexity) spans 318 to 327; sequence DNNNLEKSSS.

As to quaternary structure, homodimer. Interacts with LHW.

It is found in the nucleus. Transcription factor required for MONOPTEROS-dependent root initiation in embryo. Transcriptionally controlled by MONOPTEROS. The protein is Transcription factor AIG1 (BHLH32) of Arabidopsis thaliana (Mouse-ear cress).